The sequence spans 1143 residues: Serine/threonine-protein kinase BRI1-like 2 (1143 aa).

An N-terminal signal peptide occupies residues 1 to 31 (MTTSPIRVRIRTRIQISFIFLLTHLSQSSSS). Residues 32–756 (DQSSLKTDSL…GTRAASWANS (725 aa)) are Extracellular-facing. The Cys pair 1 motif lies at 68 to 75 (CQFSGVTC). 24 LRR repeats span residues 77–101 (GGRV…AFTS), 102–125 (LDSL…LLLL), 126–150 (PLTL…FFSK), 151–175 (YSNL…LFLS), 177–200 (KKLQ…TIPL), 203–227 (CVSM…LINC), 228–250 (TNLK…SFGE), 251–275 (LKLL…IGDT), 277–299 (RSLQ…SLSS), 300–324 (CSWL…ILRS), 326–349 (GSLQ…ISAC), 351–373 (SLRI…LCPG), 374–398 (AASL…ISQC), 399–422 (SELR…IGNL), 424–446 (KLEQ…IGKL), 447–470 (QNLK…FFNC), 472–493 (NIEW…DFGI), 494–518 (LSRL…LGKC), 520–542 (TLVW…LGRQ), 570–594 (VGGL…KSCD), 610–634 (YQTI…IGEM), 635–660 (IALQ…QLKN), 662–681 (GVFD…SFSN), and 682–707 (LSFL…QLST). N-linked (GlcNAc...) asparagine glycans are attached at residues Asn84 and Asn118. N-linked (GlcNAc...) asparagine glycans are attached at residues Asn163, Asn188, Asn226, and Asn234. N-linked (GlcNAc...) asparagine glycans are attached at residues Asn288 and Asn312. Asn412 carries an N-linked (GlcNAc...) asparagine glycan. N-linked (GlcNAc...) asparagine glycosylation occurs at Asn469. Asn506 carries N-linked (GlcNAc...) asparagine glycosylation. The N-linked (GlcNAc...) asparagine glycan is linked to Asn681. Positions 720–727 (CGVPLPEC) match the Cys pair 2 motif. The chain crosses the membrane as a helical span at residues 757-777 (IVLGVLISAASVCILIVWAIA). The Cytoplasmic segment spans residues 778–1143 (VRARRRDADD…NNSHSHSNSL (366 aa)). At Thr835 the chain carries Phosphothreonine. One can recognise a Protein kinase domain in the interval 838 to 1129 (FSAASMIGHG…LQVVASLREL (292 aa)). Residues 844–852 (IGHGGFGEV) and Lys866 contribute to the ATP site. Position 911 is a phosphotyrosine (Tyr911). Catalysis depends on Asp966, which acts as the Proton acceptor. At Ser1001 the chain carries Phosphoserine. Tyr1009 is modified (phosphotyrosine).

It belongs to the protein kinase superfamily. Ser/Thr protein kinase family. In terms of assembly, interacts with TTL3. Expressed in provascular and procambial sites throughout plant development. Expressed throughout globe- to heart-staged embryos. Then, it is restricted to procambial cells by the late torpedo stage, and this pattern persists throughout the duration of embryo development. After germination, it is expressed not only in procambial cells throughout the plant but also in all lateral organ primordia before the onset of vascularization.

It localises to the cell membrane. It catalyses the reaction L-seryl-[protein] + ATP = O-phospho-L-seryl-[protein] + ADP + H(+). It carries out the reaction L-threonyl-[protein] + ATP = O-phospho-L-threonyl-[protein] + ADP + H(+). Functionally, receptor with a serine/threonine-protein kinase activity, which may transduce extracellular spatial and temporal signals into downstream cell differentiation responses in provascular and procambial cells. In contrast to BRI1, BRL1 and BRL3, it does not bind brassinolide. The protein is Serine/threonine-protein kinase BRI1-like 2 of Arabidopsis thaliana (Mouse-ear cress).